We begin with the raw amino-acid sequence, 115 residues long: T cell receptor beta variable 7-4 (115 aa).

Residues 1-21 (MGTRLLCWVVLGFLGTDHTGA) form the signal peptide. In terms of domain architecture, Ig-like spans 22–115 (GVSQSPRYKV…SAVYLCASSL (94 aa)). Cysteines 42 and 111 form a disulfide. Residues 67 to 97 (YSQSDAQRDKSGRPSGRFSAERPERSVSTLK) are disordered.

Alpha-beta TR is a heterodimer composed of an alpha and beta chain; disulfide-linked. The alpha-beta TR is associated with the transmembrane signaling CD3 coreceptor proteins to form the TR-CD3 (TcR or TCR). The assembly of alpha-beta TR heterodimers with CD3 occurs in the endoplasmic reticulum where a single alpha-beta TR heterodimer associates with one CD3D-CD3E heterodimer, one CD3G-CD3E heterodimer and one CD247 homodimer forming a stable octameric structure. CD3D-CD3E and CD3G-CD3E heterodimers preferentially associate with TR alpha and TR beta chains, respectively. The association of the CD247 homodimer is the last step of TcR assembly in the endoplasmic reticulum and is required for transport to the cell surface.

The protein localises to the cell membrane. Functionally, v region of the variable domain of T cell receptor (TR) beta chain that participates in the antigen recognition. Alpha-beta T cell receptors are antigen specific receptors which are essential to the immune response and are present on the cell surface of T lymphocytes. Recognize peptide-major histocompatibility (MH) (pMH) complexes that are displayed by antigen presenting cells (APC), a prerequisite for efficient T cell adaptive immunity against pathogens. Binding of alpha-beta TR to pMH complex initiates TR-CD3 clustering on the cell surface and intracellular activation of LCK that phosphorylates the ITAM motifs of CD3G, CD3D, CD3E and CD247 enabling the recruitment of ZAP70. In turn ZAP70 phosphorylates LAT, which recruits numerous signaling molecules to form the LAT signalosome. The LAT signalosome propagates signal branching to three major signaling pathways, the calcium, the mitogen-activated protein kinase (MAPK) kinase and the nuclear factor NF-kappa-B (NF-kB) pathways, leading to the mobilization of transcription factors that are critical for gene expression and essential for T cell growth and differentiation. The T cell repertoire is generated in the thymus, by V-(D)-J rearrangement. This repertoire is then shaped by intrathymic selection events to generate a peripheral T cell pool of self-MH restricted, non-autoaggressive T cells. Post-thymic interaction of alpha-beta TR with the pMH complexes shapes TR structural and functional avidity. This Homo sapiens (Human) protein is T cell receptor beta variable 7-4.